Here is a 251-residue protein sequence, read N- to C-terminus: uncharacterized protein (251 aa).

The segment at 207 to 251 (ATPHSKRGRTKLYRKEPPGDNRSPPPWQEPHGEGLAEKLSPGPAR) is disordered.

This is an uncharacterized protein from Treponema pallidum (strain Nichols).